A 1046-amino-acid polypeptide reads, in one-letter code: uncharacterized protein (1046 aa).

The segment covering 594 to 615 has biased composition (low complexity); that stretch reads LNSIPSDSSSSGSSRKSSPRGS. The disordered stretch occupies residues 594–622; sequence LNSIPSDSSSSGSSRKSSPRGSPNLGEAP.

This is an uncharacterized protein from Invertebrate iridescent virus 6 (IIV-6).